A 307-amino-acid polypeptide reads, in one-letter code: Dihydroorotate dehydrogenase B (NAD(+)), catalytic subunit (307 aa).

FMN is bound by residues Ser-22 and 46–47; that span reads KT. Substrate is bound by residues Lys-46, 70–74, and Asn-128; that span reads NAVGL. Asn-128 lines the FMN pocket. Catalysis depends on Cys-131, which acts as the Nucleophile. FMN contacts are provided by Lys-166 and Ile-192. Position 193–194 (193–194) interacts with substrate; sequence NT. Residues Gly-218, 244–245, and 266–267 contribute to the FMN site; these read GG and GT.

Belongs to the dihydroorotate dehydrogenase family. Type 1 subfamily. As to quaternary structure, heterotetramer of 2 PyrK and 2 PyrD type B subunits. FMN is required as a cofactor.

Its subcellular location is the cytoplasm. It catalyses the reaction (S)-dihydroorotate + NAD(+) = orotate + NADH + H(+). The protein operates within pyrimidine metabolism; UMP biosynthesis via de novo pathway; orotate from (S)-dihydroorotate (NAD(+) route): step 1/1. Its function is as follows. Catalyzes the conversion of dihydroorotate to orotate with NAD(+) as electron acceptor. The protein is Dihydroorotate dehydrogenase B (NAD(+)), catalytic subunit (pyrD) of Desulforudis audaxviator (strain MP104C).